We begin with the raw amino-acid sequence, 101 residues long: Movement protein (101 aa).

The helical transmembrane segment at 30–50 (EVAILSFVALICIYLLYLWVL) threads the bilayer. The disordered stretch occupies residues 80–101 (PIPNTLEPTAPVHPGPFVPGQG). Pro residues predominate over residues 90–101 (PVHPGPFVPGQG).

Belongs to the mastrevirus movement protein family. Interacts with the capsid protein (CP). Part of a MP-CP-viral DNA complex.

The protein resides in the host membrane. Involved in the viral transport within, and between cells. The polypeptide is Movement protein (Avena sativa (Oat)).